The chain runs to 374 residues: MQPGPALQAVLLAVLLSEPRSSKGRLLSGQLVCRGGTRRPCYKVIYFHDAFQRLNFEEAKEACRRDGGQLVSIETEDEQRLIEKFIENLLASDGDFWIGLRRLEVKQVNNTACQDLYAWTDGSTSQFRNWYVDEPSCGSEVCVVMYHQPSAPPGIGGSYMFQWNDDRCNMKNNFICKYADEKPSTTPSIRPGGEATEPPTPVLPEETQKEDTKETFKESREAALNLAYILIPSIPLFLLLVVTSAACWVWICRRRKQEQPDPTTKEQHTIWPTPHQENSPNLDVYNVIRKQSEADLTEPRPDLKNISFRVCSSEAPPDDISCDYDNMAVNPSESGFVTLASMESGFVTNDIYEFSPDRMGRSKESGWVENEIYY.

Residues 1–24 (MQPGPALQAVLLAVLLSEPRSSKG) form the signal peptide. The Extracellular portion of the chain corresponds to 25-221 (RLLSGQLVCR…TKETFKESRE (197 aa)). The C-type lectin domain maps to 37–177 (TRRPCYKVIY…CNMKNNFICK (141 aa)). Cystine bridges form between Cys63–Cys176 and Cys142–Cys168. Asn109 carries N-linked (GlcNAc...) asparagine glycosylation. Positions 184 to 212 (STTPSIRPGGEATEPPTPVLPEETQKEDT) are disordered. A helical transmembrane segment spans residues 222–242 (AALNLAYILIPSIPLFLLLVV). At 243 to 374 (TSAACWVWIC…SGWVENEIYY (132 aa)) the chain is on the cytoplasmic side. Ser279 and Ser292 each carry phosphoserine. The interval 323-367 (DYDNMAVNPSESGFVTLASMESGFVTNDIYEFSPDRMGRSKESGW) is interaction with NF2. An interaction with TLN1 region spans residues 330–374 (NPSESGFVTLASMESGFVTNDIYEFSPDRMGRSKESGWVENEIYY). 5 tandem repeats follow at residues 333–337 (ESGFV), 343–347 (ESGFV), 349–352 (NDIY), 364–368 (ESGWV), and 370–373 (NEIY). A 3 X 5 AA repeats of E-S-G-X-V region spans residues 333–368 (ESGFVTLASMESGFVTNDIYEFSPDRMGRSKESGWV). Residues 349–373 (NDIYEFSPDRMGRSKESGWVENEIY) are 2 X 4 AA repeats of N-X-I-Y.

Interacts with NF2 and RDX. Interacts with TLN1. As to expression, widely expressed. Abundant in the ovary.

The protein localises to the membrane. In terms of biological role, receptor for hyaluronate. The chain is Layilin (LAYN) from Cricetulus griseus (Chinese hamster).